The primary structure comprises 92 residues: Cell division protein FtsL (92 aa).

Topologically, residues 1-3 (MGR) are cytoplasmic. The helical transmembrane segment at 4–21 (ISLIVAALLMLSAISLVT) threads the bilayer. Topologically, residues 22 to 92 (SRYQSRQLFI…YMNQPAGGAQ (71 aa)) are periplasmic.

It belongs to the FtsL family. As to quaternary structure, part of a complex composed of FtsB, FtsL and FtsQ.

It localises to the cell inner membrane. Essential cell division protein. May link together the upstream cell division proteins, which are predominantly cytoplasmic, with the downstream cell division proteins, which are predominantly periplasmic. This Bordetella pertussis (strain Tohama I / ATCC BAA-589 / NCTC 13251) protein is Cell division protein FtsL.